A 642-amino-acid chain; its full sequence is Threonine--tRNA ligase (642 aa).

The 61-residue stretch at 1-61 folds into the TGS domain; the sequence is MPVITLPDGS…HEDASLSIIT (61 aa). The interval 243 to 534 is catalytic; sequence DHRKIGKQLD…LIEEYAGRFP (292 aa). Residues Cys-334, His-385, and His-511 each coordinate Zn(2+).

Belongs to the class-II aminoacyl-tRNA synthetase family. Homodimer. It depends on Zn(2+) as a cofactor.

Its subcellular location is the cytoplasm. The enzyme catalyses tRNA(Thr) + L-threonine + ATP = L-threonyl-tRNA(Thr) + AMP + diphosphate + H(+). Its function is as follows. Catalyzes the attachment of threonine to tRNA(Thr) in a two-step reaction: L-threonine is first activated by ATP to form Thr-AMP and then transferred to the acceptor end of tRNA(Thr). Also edits incorrectly charged L-seryl-tRNA(Thr). The chain is Threonine--tRNA ligase from Shewanella amazonensis (strain ATCC BAA-1098 / SB2B).